Consider the following 115-residue polypeptide: Large ribosomal subunit protein bL21 (115 aa).

The protein belongs to the bacterial ribosomal protein bL21 family. In terms of assembly, part of the 50S ribosomal subunit. Contacts protein L20.

Functionally, this protein binds to 23S rRNA in the presence of protein L20. In Picosynechococcus sp. (strain ATCC 27264 / PCC 7002 / PR-6) (Agmenellum quadruplicatum), this protein is Large ribosomal subunit protein bL21.